Reading from the N-terminus, the 422-residue chain is Target of rapamycin complex 2 subunit bit61 (422 aa).

Positions 48–69 are enriched in polar residues; it reads VTTKESNVGDSDTTENIKSPFN. Positions 48 to 101 are disordered; it reads VTTKESNVGDSDTTENIKSPFNGQWPFSRRSSQSSSHPVFEETHWSKHSKRPGK. Residues Ser-109, Ser-132, and Ser-201 each carry the phosphoserine modification.

Belongs to the BIT61 family. As to quaternary structure, the target of rapamycin complex 2 (TORC2) is composed of at least bit61, pop3/wat1, sin1, ste20 and tor1. Either Thr-23, Thr-25 or Ser-26 and Ser-78 or Ser-79 are phosphorylated as well.

The protein resides in the cytoplasm. It localises to the nucleus. Functionally, component of TORC2, which regulates multiple cellular processes to control cell growth in response to environmental signals. TORC2 is required for cell survival under various stress conditions. TORC2 positively controls G1 cell-cycle arrest, sexual development and amino acid uptake. Positively regulates amino acid uptake through the control of expression of amino acid permeases. This is Target of rapamycin complex 2 subunit bit61 from Schizosaccharomyces pombe (strain 972 / ATCC 24843) (Fission yeast).